The following is a 439-amino-acid chain: Glucose-1-phosphate adenylyltransferase (439 aa).

Alpha-D-glucose 1-phosphate-binding positions include Gly-172, 187–188 (EK), and Ser-219.

Belongs to the bacterial/plant glucose-1-phosphate adenylyltransferase family. Homotetramer.

The enzyme catalyses alpha-D-glucose 1-phosphate + ATP + H(+) = ADP-alpha-D-glucose + diphosphate. It functions in the pathway glycan biosynthesis; glycogen biosynthesis. In terms of biological role, involved in the biosynthesis of ADP-glucose, a building block required for the elongation reactions to produce glycogen. Catalyzes the reaction between ATP and alpha-D-glucose 1-phosphate (G1P) to produce pyrophosphate and ADP-Glc. The chain is Glucose-1-phosphate adenylyltransferase from Synechocystis sp. (strain ATCC 27184 / PCC 6803 / Kazusa).